The following is a 507-amino-acid chain: MDFELKLLPLARICSEKCDALLVLIPQDLSAGGDDPLSALAALALKAGDLEAKPGKLLSAYRTPGIAATRVVLAGVGDASPRNVRTAVNAAMANLKNGNTQRVVVSLAAMNNAQPEIVRAAVVACSEAAYVYSTTKSKVSPVKLQRVVIGVNELSVARPGFDKALALVKGIEFAKEWANRPANHATPTLLAGAARELARLRNIKVEVLGPKEVAKLGMGSFMAVAQGTSEPLRFIVLRYEGAAKSVAPVVLIGKGITFDTGGISIKPAAEMDEMKFDMCGAASVLGTFRALAELQPALNVVGLIPASENMPGGRALKPGDVVTSMSGQTIEILNTDAEGRLVLCDALTYAERFKPRAVVDIATLTGACVIALGGVRSGLFSNNDELAQSLAAAGESSLDPCWRMPLDDDYAEGLKTNFADVANVAGRAGGAVTAAKFLHRFAGSFPWAHLDIAGTAWKGGAAKGATGRPVPLLLDYLLGQVTAAAPRKAQPKARSAKRSKPVSRTRA.

The Mn(2+) site is built by Lys254 and Asp259. The active site involves Lys266. Residues Asp277, Asp336, and Glu338 each contribute to the Mn(2+) site. Arg340 is a catalytic residue. The disordered stretch occupies residues 486-507; that stretch reads PRKAQPKARSAKRSKPVSRTRA. Over residues 489-507 the composition is skewed to basic residues; sequence AQPKARSAKRSKPVSRTRA.

The protein belongs to the peptidase M17 family. It depends on Mn(2+) as a cofactor.

It localises to the cytoplasm. It carries out the reaction Release of an N-terminal amino acid, Xaa-|-Yaa-, in which Xaa is preferably Leu, but may be other amino acids including Pro although not Arg or Lys, and Yaa may be Pro. Amino acid amides and methyl esters are also readily hydrolyzed, but rates on arylamides are exceedingly low.. It catalyses the reaction Release of an N-terminal amino acid, preferentially leucine, but not glutamic or aspartic acids.. In terms of biological role, presumably involved in the processing and regular turnover of intracellular proteins. Catalyzes the removal of unsubstituted N-terminal amino acids from various peptides. The sequence is that of Probable cytosol aminopeptidase from Polaromonas sp. (strain JS666 / ATCC BAA-500).